We begin with the raw amino-acid sequence, 134 residues long: Phosphoribosyl-AMP cyclohydrolase (134 aa).

Residue Asp80 participates in Mg(2+) binding. A Zn(2+)-binding site is contributed by Cys81. Positions 82 and 84 each coordinate Mg(2+). Zn(2+)-binding residues include Cys98 and Cys105.

The protein belongs to the PRA-CH family. Homodimer. Requires Mg(2+) as cofactor. Zn(2+) serves as cofactor.

The protein localises to the cytoplasm. It carries out the reaction 1-(5-phospho-beta-D-ribosyl)-5'-AMP + H2O = 1-(5-phospho-beta-D-ribosyl)-5-[(5-phospho-beta-D-ribosylamino)methylideneamino]imidazole-4-carboxamide. Its pathway is amino-acid biosynthesis; L-histidine biosynthesis; L-histidine from 5-phospho-alpha-D-ribose 1-diphosphate: step 3/9. Its function is as follows. Catalyzes the hydrolysis of the adenine ring of phosphoribosyl-AMP. The chain is Phosphoribosyl-AMP cyclohydrolase from Bordetella avium (strain 197N).